The following is a 200-amino-acid chain: GTP-binding protein rho5 (200 aa).

GTP is bound at residue 13-20; the sequence is GDGACGKT. The Effector region motif lies at 35 to 43; it reads YVPTVFENY. GTP contacts are provided by residues 60 to 64 and 118 to 121; these read DTAGQ and CKVD. Cys197 carries the post-translational modification Cysteine methyl ester. Cys197 is lipidated: S-geranylgeranyl cysteine. Positions 198 to 200 are cleaved as a propeptide — removed in mature form; it reads ILL.

Belongs to the small GTPase superfamily. Rho family.

Its subcellular location is the cell membrane. The chain is GTP-binding protein rho5 (rho5) from Schizosaccharomyces pombe (strain 972 / ATCC 24843) (Fission yeast).